The primary structure comprises 466 residues: Ribulose bisphosphate carboxylase large chain (466 aa).

The residue at position 5 (K5) is an N6,N6,N6-trimethyllysine. The substrate site is built by N114 and T164. The Proton acceptor role is filled by K166. Substrate is bound at residue K168. Residues K192, D194, and E195 each contribute to the Mg(2+) site. K192 is subject to N6-carboxylysine. H285 acts as the Proton acceptor in catalysis. Residues R286, H318, and S370 each contribute to the substrate site.

Belongs to the RuBisCO large chain family. Type I subfamily. In terms of assembly, heterohexadecamer of 8 large chains and 8 small chains; disulfide-linked. The disulfide link is formed within the large subunit homodimers. Mg(2+) serves as cofactor. In terms of processing, the disulfide bond which can form in the large chain dimeric partners within the hexadecamer appears to be associated with oxidative stress and protein turnover.

It is found in the plastid. It localises to the chloroplast. The enzyme catalyses 2 (2R)-3-phosphoglycerate + 2 H(+) = D-ribulose 1,5-bisphosphate + CO2 + H2O. It catalyses the reaction D-ribulose 1,5-bisphosphate + O2 = 2-phosphoglycolate + (2R)-3-phosphoglycerate + 2 H(+). In terms of biological role, ruBisCO catalyzes two reactions: the carboxylation of D-ribulose 1,5-bisphosphate, the primary event in carbon dioxide fixation, as well as the oxidative fragmentation of the pentose substrate in the photorespiration process. Both reactions occur simultaneously and in competition at the same active site. The protein is Ribulose bisphosphate carboxylase large chain of Oxalis dillenii (Gray-green wood sorrel).